The following is a 479-amino-acid chain: Ribosomal RNA small subunit methyltransferase F (479 aa).

S-adenosyl-L-methionine contacts are provided by residues 125-131, Glu-149, Asp-176, and Asp-194; that span reads AAAPGSK. Cys-247 acts as the Nucleophile in catalysis.

This sequence belongs to the class I-like SAM-binding methyltransferase superfamily. RsmB/NOP family.

It is found in the cytoplasm. It carries out the reaction cytidine(1407) in 16S rRNA + S-adenosyl-L-methionine = 5-methylcytidine(1407) in 16S rRNA + S-adenosyl-L-homocysteine + H(+). In terms of biological role, specifically methylates the cytosine at position 1407 (m5C1407) of 16S rRNA. This chain is Ribosomal RNA small subunit methyltransferase F, found in Escherichia coli (strain SMS-3-5 / SECEC).